The following is a 620-amino-acid chain: Glutathione-regulated potassium-efflux system protein KefC (620 aa).

The next 12 helical transmembrane spans lie at 4-24, 26-46, 54-74, 90-110, 114-134, 149-169, 178-198, 218-238, 270-290, 294-314, 327-347, and 359-379; these read HTLI…PIAV, LGLG…PWGL, SILH…GLEL, GALQ…LLGL, VAEL…MQAM, FAVL…IPLL, MGAF…VVLL, VFSA…EEVG, GLLL…GTLL, LRIV…LWLI, WFAV…GAAQ, and SLTL…VILN. The region spanning 399–518 is the RCK N-terminal domain; it reads QPRVIIAGFG…AGVEKPERET (120 aa). The tract at residues 597–620 is disordered; the sequence is GWQGTEEGKHTGNMADEPETKPSS.

This sequence belongs to the monovalent cation:proton antiporter 2 (CPA2) transporter (TC 2.A.37) family. KefC subfamily. As to quaternary structure, homodimer. Interacts with the regulatory subunit KefF.

Its subcellular location is the cell inner membrane. Functionally, pore-forming subunit of a potassium efflux system that confers protection against electrophiles. Catalyzes K(+)/H(+) antiport. The chain is Glutathione-regulated potassium-efflux system protein KefC from Escherichia coli O8 (strain IAI1).